The primary structure comprises 91 residues: UPF0358 protein SAB0977 (91 aa).

This sequence belongs to the UPF0358 family.

The protein is UPF0358 protein SAB0977 of Staphylococcus aureus (strain bovine RF122 / ET3-1).